The chain runs to 507 residues: MVNIRPDEISNVIRTRIEQYNQEVKVVNTGTVPQVGDGIARIYGLDKVMAGELVKFEDGTVGIAPNSESDNVGVVLMGDGLTIQEGSSVKATGQIAQIPVSEAYLGRVVNALAQPIDGKGKIPASESRLIESPAPGIISRRSVYEPMQTGLIAIDSMIPIGRGQRELIIGDRQTGKTAVATDTILNQKGQDVICIYVAIGQKASSVAQVVNTFEERGALKYTIVVTENANSPATLQYLAPYTGAALAEYFMYRKQHTLIVYDDLSKQAQAYRQMSLLLRRPPGREAYPGDVFYLHSRLLERAAKSNSQLGEGSMTAPPIIETQAGDVSAYIPTNVISITDGQIFLSADLFNAGIRPAINVGISVSRVGSAAQIRAMKQVAGKLKLELAQFAELEAFAQFASDLDKATQNQLARGQRLRELLKQSQSAPLGVEEQVATIHTGVNGYSDILETGQVKKFLVQLREYLPTNKPQFAEIIRSTKIFTEEAENILKEAIREHSELFSSRESK.

Gly-170–Thr-177 is an ATP binding site.

The protein belongs to the ATPase alpha/beta chains family. F-type ATPases have 2 components, CF(1) - the catalytic core - and CF(0) - the membrane proton channel. CF(1) has five subunits: alpha(3), beta(3), gamma(1), delta(1), epsilon(1). CF(0) has four main subunits: a, b, b' and c.

The protein resides in the plastid membrane. The catalysed reaction is ATP + H2O + 4 H(+)(in) = ADP + phosphate + 5 H(+)(out). Produces ATP from ADP in the presence of a proton gradient across the membrane. The alpha chain is a regulatory subunit. This Aneura mirabilis (Parasitic liverwort) protein is ATP synthase subunit alpha, plastid.